We begin with the raw amino-acid sequence, 307 residues long: Porphobilinogen deaminase (307 aa).

Cysteine 239 carries the S-(dipyrrolylmethanemethyl)cysteine modification.

The protein belongs to the HMBS family. In terms of assembly, monomer. Dipyrromethane is required as a cofactor.

It carries out the reaction 4 porphobilinogen + H2O = hydroxymethylbilane + 4 NH4(+). It participates in porphyrin-containing compound metabolism; protoporphyrin-IX biosynthesis; coproporphyrinogen-III from 5-aminolevulinate: step 2/4. Its function is as follows. Tetrapolymerization of the monopyrrole PBG into the hydroxymethylbilane pre-uroporphyrinogen in several discrete steps. This is Porphobilinogen deaminase from Campylobacter jejuni subsp. jejuni serotype O:23/36 (strain 81-176).